The following is a 415-amino-acid chain: Gamma-glutamyl phosphate reductase (415 aa).

This sequence belongs to the gamma-glutamyl phosphate reductase family.

Its subcellular location is the cytoplasm. The enzyme catalyses L-glutamate 5-semialdehyde + phosphate + NADP(+) = L-glutamyl 5-phosphate + NADPH + H(+). Its pathway is amino-acid biosynthesis; L-proline biosynthesis; L-glutamate 5-semialdehyde from L-glutamate: step 2/2. In terms of biological role, catalyzes the NADPH-dependent reduction of L-glutamate 5-phosphate into L-glutamate 5-semialdehyde and phosphate. The product spontaneously undergoes cyclization to form 1-pyrroline-5-carboxylate. The sequence is that of Gamma-glutamyl phosphate reductase from Bacteroides fragilis (strain YCH46).